The primary structure comprises 71 residues: MVPPVQVSPLIKLGRYSALFLGVAYGAKRYNYLKPRAEEERRIAAEEKKKQDELKRIERELAEAQEDSILK.

Position 34 is an N6-acetyllysine (Lys-34). Ser-68 is modified (phosphoserine).

It belongs to the ATPase e subunit family. Component of the ATP synthase complex composed at least of ATP5F1A/subunit alpha, ATP5F1B/subunit beta, ATP5MC1/subunit c (homooctomer), MT-ATP6/subunit a, MT-ATP8/subunit 8, ATP5ME/subunit e, ATP5MF/subunit f, ATP5MG/subunit g, ATP5MK/subunit k, ATP5MJ/subunit j, ATP5F1C/subunit gamma, ATP5F1D/subunit delta, ATP5F1E/subunit epsilon, ATP5PF/subunit F6, ATP5PB/subunit b, ATP5PD/subunit d, ATP5PO/subunit OSCP. ATP synthase complex consists of a soluble F(1) head domain (subunits alpha(3) and beta(3)) - the catalytic core - and a membrane F(0) domain - the membrane proton channel (subunits c, a, 8, e, f, g, k and j). These two domains are linked by a central stalk (subunits gamma, delta, and epsilon) rotating inside the F1 region and a stationary peripheral stalk (subunits F6, b, d, and OSCP).

Its subcellular location is the mitochondrion. It localises to the mitochondrion inner membrane. Its function is as follows. Subunit e, of the mitochondrial membrane ATP synthase complex (F(1)F(0) ATP synthase or Complex V) that produces ATP from ADP in the presence of a proton gradient across the membrane which is generated by electron transport complexes of the respiratory chain. ATP synthase complex consist of a soluble F(1) head domain - the catalytic core - and a membrane F(1) domain - the membrane proton channel. These two domains are linked by a central stalk rotating inside the F(1) region and a stationary peripheral stalk. During catalysis, ATP synthesis in the catalytic domain of F(1) is coupled via a rotary mechanism of the central stalk subunits to proton translocation. In vivo, can only synthesize ATP although its ATP hydrolase activity can be activated artificially in vitro. Part of the complex F(0) domain. In Sus scrofa (Pig), this protein is ATP synthase F(0) complex subunit e, mitochondrial.